The primary structure comprises 291 residues: Phosphatidylcholine-sterol acyltransferase (291 aa).

N-linked (GlcNAc...) asparagine glycosylation is present at Asn-28. The active-site Nucleophile is the Ser-125. Asn-179 carries N-linked (GlcNAc...) asparagine glycosylation. Residues Cys-220 and Cys-263 are joined by a disulfide bond. Asp-252 acts as the Charge relay system in catalysis. Asn-280 carries N-linked (GlcNAc...) asparagine glycosylation.

This sequence belongs to the AB hydrolase superfamily. Lipase family.

The protein localises to the secreted. The catalysed reaction is a sterol + a 1,2-diacyl-sn-glycero-3-phosphocholine = a sterol ester + a 1-acyl-sn-glycero-3-phosphocholine. With respect to regulation, APOA1 is the most potent activator in plasma. Also activated by APOE, APOC1 and APOA4. In terms of biological role, central enzyme in the extracellular metabolism of plasma lipoproteins. Synthesized mainly in the liver and secreted into plasma where it converts cholesterol and phosphatidylcholines (lecithins) to cholesteryl esters and lysophosphatidylcholines on the surface of high and low density lipoproteins (HDLs and LDLs). The cholesterol ester is then transported back to the liver. Has a preference for plasma 16:0-18:2 or 18:O-18:2 phosphatidylcholines. Also produced in the brain by primary astrocytes, and esterifies free cholesterol on nascent APOE-containing lipoproteins secreted from glia and influences cerebral spinal fluid (CSF) APOE- and APOA1 levels. Together with APOE and the cholesterol transporter ABCA1, plays a key role in the maturation of glial-derived, nascent lipoproteins. Required for remodeling high-density lipoprotein particles into their spherical forms. This is Phosphatidylcholine-sterol acyltransferase (LCAT) from Myodes glareolus (Bank vole).